Consider the following 393-residue polypeptide: F-box protein KIB4 (393 aa).

In terms of domain architecture, F-box spans 12-59 (AKQPILVLDLVRLVLERLSFVDFHRARCVSSVWYSASKSCIGGTNPTA).

It is found in the cytoplasm. The protein localises to the nucleus. Its subcellular location is the nucleolus. In terms of biological role, component of SCF(ASK-cullin-F-box) E3 ubiquitin ligase complexes, which may mediate the ubiquitination and subsequent proteasomal degradation of target proteins. Required for brassinosteroid (BR) signal transduction. Mediates ASK7/BIN2/SK21 inactivation both by competing with substrate binding (e.g. BZR1) and by promoting its ubiquitination and subsequent proteasomal degradation. The sequence is that of F-box protein KIB4 from Arabidopsis thaliana (Mouse-ear cress).